The following is a 395-amino-acid chain: RNA pseudouridine synthase 7 (395 aa).

The interval 1–21 (MKRKQQEDDNDDGVEKAVSPV) is disordered. The region spanning 74–136 (KTIVDLFADE…HEPPVMIDDV (63 aa)) is the S4 RNA-binding domain. Asp-187 is a catalytic residue. Residues 244 to 255 (EGRSTAEDANSS) are compositionally biased toward polar residues. Positions 244–263 (EGRSTAEDANSSGDDKKVKG) are disordered.

This sequence belongs to the pseudouridine synthase RluA family.

It carries out the reaction a uridine in RNA = a pseudouridine in RNA. The chain is RNA pseudouridine synthase 7 from Arabidopsis thaliana (Mouse-ear cress).